Here is a 485-residue protein sequence, read N- to C-terminus: NADH-quinone oxidoreductase subunit N (485 aa).

The next 14 helical transmembrane spans lie at L8–I28, F35–V55, L75–L95, F105–L125, S127–F147, Y159–A179, L203–F223, P235–M255, V271–Q291, L297–K317, V326–L346, A374–G394, W408–R427, and V455–I475.

Belongs to the complex I subunit 2 family. NDH-1 is composed of 13 different subunits. Subunits NuoA, H, J, K, L, M, N constitute the membrane sector of the complex.

It localises to the cell inner membrane. It catalyses the reaction a quinone + NADH + 5 H(+)(in) = a quinol + NAD(+) + 4 H(+)(out). Its function is as follows. NDH-1 shuttles electrons from NADH, via FMN and iron-sulfur (Fe-S) centers, to quinones in the respiratory chain. The immediate electron acceptor for the enzyme in this species is believed to be ubiquinone. Couples the redox reaction to proton translocation (for every two electrons transferred, four hydrogen ions are translocated across the cytoplasmic membrane), and thus conserves the redox energy in a proton gradient. The protein is NADH-quinone oxidoreductase subunit N of Cronobacter sakazakii (strain ATCC BAA-894) (Enterobacter sakazakii).